We begin with the raw amino-acid sequence, 495 residues long: 3-octaprenyl-4-hydroxybenzoate carboxy-lyase (495 aa).

Asn-172 serves as a coordination point for Mn(2+). Residues 175 to 177 (IYR), 189 to 191 (RWL), and 194 to 195 (RG) contribute to the prenylated FMN site. Position 238 (Glu-238) interacts with Mn(2+). Asp-287 functions as the Proton donor in the catalytic mechanism.

This sequence belongs to the UbiD family. As to quaternary structure, homohexamer. Prenylated FMN serves as cofactor. Mn(2+) is required as a cofactor.

It is found in the cell membrane. The enzyme catalyses a 4-hydroxy-3-(all-trans-polyprenyl)benzoate + H(+) = a 2-(all-trans-polyprenyl)phenol + CO2. Its pathway is cofactor biosynthesis; ubiquinone biosynthesis. Its function is as follows. Catalyzes the decarboxylation of 3-octaprenyl-4-hydroxy benzoate to 2-octaprenylphenol, an intermediate step in ubiquinone biosynthesis. The sequence is that of 3-octaprenyl-4-hydroxybenzoate carboxy-lyase from Yersinia pseudotuberculosis serotype O:1b (strain IP 31758).